Reading from the N-terminus, the 122-residue chain is uncharacterized protein (122 aa).

Residues 1 to 22 (MNMMRIFYIGLSGVGMMFSSMA) form the signal peptide.

This is an uncharacterized protein from Escherichia coli (strain K12).